Reading from the N-terminus, the 89-residue chain is MEYQYPLDYDWSNEEMVTMVKFYEAIEKAYEKGIIREELMGLYRRFKEIVPSKAEEKKIDKEFQEVSGYSIYRAIQRAKEIEEQKLVKM.

Belongs to the UPF0223 family.

In Bacillus anthracis (strain CDC 684 / NRRL 3495), this protein is UPF0223 protein BAMEG_4214.